The chain runs to 200 residues: MHIHQTTFIKSAVKPADYPPVDLPEIAFAGRSNVGKSSLINVIVERKALVRTSSTPGRTQLINFFQVTGVPFSLNLVDLPGYGYAKVPLDVKRQWGPMMERYLSGRESLRGVVLILDIRRIPSEEDLQMLNWLRSYKRRPIIVLTKCDKVTKNERARQTAAIAARLEMDKSQLIHFSALSKDGRDTVWQAIQDAVEEDAP.

The EngB-type G domain maps to 22–197 (DLPEIAFAGR…WQAIQDAVEE (176 aa)). Residues 30 to 37 (GRSNVGKS), 57 to 61 (GRTQL), 78 to 81 (DLPG), 145 to 148 (TKCD), and 176 to 178 (FSA) contribute to the GTP site. Serine 37 and threonine 59 together coordinate Mg(2+).

The protein belongs to the TRAFAC class TrmE-Era-EngA-EngB-Septin-like GTPase superfamily. EngB GTPase family. Requires Mg(2+) as cofactor.

Its function is as follows. Necessary for normal cell division and for the maintenance of normal septation. This chain is Probable GTP-binding protein EngB, found in Trichlorobacter lovleyi (strain ATCC BAA-1151 / DSM 17278 / SZ) (Geobacter lovleyi).